The sequence spans 144 residues: Deoxyuridine 5'-triphosphate nucleotidohydrolase (144 aa).

Residues 63–65, Asn-76, and 80–82 contribute to the substrate site; these read RSG and TVD.

The protein belongs to the dUTPase family. It depends on Mg(2+) as a cofactor.

The enzyme catalyses dUTP + H2O = dUMP + diphosphate + H(+). Its pathway is pyrimidine metabolism; dUMP biosynthesis; dUMP from dCTP (dUTP route): step 2/2. In terms of biological role, this enzyme is involved in nucleotide metabolism: it produces dUMP, the immediate precursor of thymidine nucleotides and it decreases the intracellular concentration of dUTP so that uracil cannot be incorporated into DNA. The chain is Deoxyuridine 5'-triphosphate nucleotidohydrolase from Treponema denticola (strain ATCC 35405 / DSM 14222 / CIP 103919 / JCM 8153 / KCTC 15104).